The following is a 398-amino-acid chain: Spermatogenesis associated 6-like protein (398 aa).

Residues 170-215 (KLNGPANNRKKKPKEKNSDQLSKGTPFWGPSPQRLHLHRPTQRNPG) are disordered. Phosphoserine is present on residues serine 269 and serine 272.

The protein belongs to the SPATA6 family.

This chain is Spermatogenesis associated 6-like protein (Spata6l), found in Rattus norvegicus (Rat).